Here is a 141-residue protein sequence, read N- to C-terminus: Nucleoside triphosphatase NudI (141 aa).

Residues 1-141 (MRQRTIVCPL…RKTLRLKGLL (141 aa)) form the Nudix hydrolase domain. Positions 38–59 (GGVEPGERIEEALRREIREELG) match the Nudix box motif.

This sequence belongs to the Nudix hydrolase family. NudI subfamily. As to quaternary structure, monomer. Requires Mg(2+) as cofactor.

It carries out the reaction a ribonucleoside 5'-triphosphate + H2O = a ribonucleoside 5'-phosphate + diphosphate + H(+). The catalysed reaction is a 2'-deoxyribonucleoside 5'-triphosphate + H2O = a 2'-deoxyribonucleoside 5'-phosphate + diphosphate + H(+). It catalyses the reaction dUTP + H2O = dUMP + diphosphate + H(+). The enzyme catalyses dTTP + H2O = dTMP + diphosphate + H(+). It carries out the reaction dCTP + H2O = dCMP + diphosphate + H(+). In terms of biological role, catalyzes the hydrolysis of nucleoside triphosphates, with a preference for pyrimidine deoxynucleoside triphosphates (dUTP, dTTP and dCTP). The polypeptide is Nucleoside triphosphatase NudI (Escherichia coli O9:H4 (strain HS)).